The sequence spans 260 residues: Shikimate dehydrogenase (260 aa).

Lysine 71 (proton acceptor) is an active-site residue. 124 to 128 (GAGGA) is a binding site for NADP(+).

It belongs to the shikimate dehydrogenase family.

The enzyme catalyses shikimate + NADP(+) = 3-dehydroshikimate + NADPH + H(+). Its pathway is metabolic intermediate biosynthesis; chorismate biosynthesis; chorismate from D-erythrose 4-phosphate and phosphoenolpyruvate: step 4/7. This Sulfurisphaera tokodaii (strain DSM 16993 / JCM 10545 / NBRC 100140 / 7) (Sulfolobus tokodaii) protein is Shikimate dehydrogenase (aroE).